Consider the following 343-residue polypeptide: MATKLTPKQKAQLDELSMSEKIAILLIQVGEDTTGEILRHLDIDSITEISKQIVQLNGTDKQIGAAVLEEFFAIFQSNQYINTGGLEYARELLTRTLGSEEAKKVMDKLTKSLQTQKNFAYLGKIKPQQLADFIINEHPQTIALILAHMEAPNAAETLSYFPDEMKAEISIRMANLGEISPQVVKRVSTVLENKLESLTSYKIEVGGLRAVAEIFNRLGQKSAKTTLARIESVDNKLAGAIKEMMFTFEDIVKLDNFAIREILKVADKKDLSLALKTSTKDLTDKFLNNMSSRAAEQFVEEMQYLGAVKIKDVDVAQRKIIEIVQSLQEKGVIQTGEEEDVIE.

The Part of the EHPQR-motif signature appears at 137-140 (EHPQ). The short motif at 245–248 (MFTF) is the M-F-X-F motif; its intrinsic flexibility is probably coupled to flagellar rotation element.

This sequence belongs to the FliG family.

The protein localises to the cell inner membrane. The protein resides in the bacterial flagellum basal body. In terms of biological role, one of the proteins that forms a switch complex that is proposed to be located at the base of the basal body. This complex interacts with chemotaxis proteins (such as CheY) in addition to contacting components of the motor that determine the direction of flagellar rotation. Required for flagellum synthesis and motility. In H.pylori four flagellar switch proteins are encoded, FliG, FliM, FliN and FliY. The sequence is that of Flagellar motor switch protein FliG from Helicobacter pylori (strain ATCC 700392 / 26695) (Campylobacter pylori).